A 326-amino-acid chain; its full sequence is Glutaredoxin 3 (326 aa).

A Thioredoxin domain is found at 1 to 108; the sequence is MANFTDAASL…LTNKVQRLGS (108 aa). Glutaredoxin domains are found at residues 125 to 227 and 227 to 326; these read NQRL…VSLE and ENRL…KGEN. C150 and C252 together coordinate [2Fe-2S] cluster.

As to quaternary structure, homodimer; the homodimer is independent of 2Fe-2S clusters. Heterotrimer; forms a heterotrimeric complex composed by two bola2 molecules and one glrx3 molecule; linked by [2Fe-2S] clusters.

The protein localises to the cytoplasm. It localises to the cytosol. Its function is as follows. Together with bola2, acts as a cytosolic iron-sulfur (Fe-S) cluster assembly factor that facilitates [2Fe-2S] cluster insertion into a subset of cytosolic proteins. Required for hemoglobin maturation. Does not possess any thyoredoxin activity since it lacks the conserved motif that is essential for catalytic activity. The sequence is that of Glutaredoxin 3 (glrx3) from Danio rerio (Zebrafish).